The sequence spans 360 residues: Peptide chain release factor 1 (360 aa).

The residue at position 237 (glutamine 237) is an N5-methylglutamine.

Belongs to the prokaryotic/mitochondrial release factor family. In terms of processing, methylated by PrmC. Methylation increases the termination efficiency of RF1.

It is found in the cytoplasm. Its function is as follows. Peptide chain release factor 1 directs the termination of translation in response to the peptide chain termination codons UAG and UAA. This is Peptide chain release factor 1 from Pseudomonas putida (strain ATCC 47054 / DSM 6125 / CFBP 8728 / NCIMB 11950 / KT2440).